The primary structure comprises 81 residues: MKTFLFLFAVLFFWSQPRMHFFFFDEKCSRINGRCTASCLKNEELVALCWKNLKCCVTVQSCGRSKGNQSDEGSGHMGTRG.

Positions 1 to 20 are cleaved as a signal peptide; the sequence is MKTFLFLFAVLFFWSQPRMH. 3 cysteine pairs are disulfide-bonded: C28–C55, C35–C49, and C39–C56. Residues 62-72 show a composition bias toward polar residues; it reads CGRSKGNQSDE. The interval 62–81 is disordered; it reads CGRSKGNQSDEGSGHMGTRG.

This sequence belongs to the beta-defensin family. As to expression, only expressed in epididymis (caput, corpus and cauda).

The protein localises to the secreted. Functionally, has antibacterial activity. This chain is Beta-defensin 34 (Defb34), found in Mus musculus (Mouse).